We begin with the raw amino-acid sequence, 98 residues long: Citrate lyase acyl carrier protein (98 aa).

At Ser-14 the chain carries O-(phosphoribosyl dephospho-coenzyme A)serine.

Belongs to the CitD family. In terms of assembly, oligomer with a subunit composition of (alpha,beta,gamma)6.

The protein localises to the cytoplasm. Functionally, covalent carrier of the coenzyme of citrate lyase. The sequence is that of Citrate lyase acyl carrier protein from Salmonella arizonae (strain ATCC BAA-731 / CDC346-86 / RSK2980).